Here is a 98-residue protein sequence, read N- to C-terminus: Large ribosomal subunit protein uL23 (98 aa).

This sequence belongs to the universal ribosomal protein uL23 family. Part of the 50S ribosomal subunit. Contacts protein L29, and trigger factor when it is bound to the ribosome.

In terms of biological role, one of the early assembly proteins it binds 23S rRNA. One of the proteins that surrounds the polypeptide exit tunnel on the outside of the ribosome. Forms the main docking site for trigger factor binding to the ribosome. The sequence is that of Large ribosomal subunit protein uL23 from Streptococcus pyogenes serotype M1.